A 338-amino-acid polypeptide reads, in one-letter code: MSDRLKPLIGTAATRPLSREEAEFAFECLFEGEATPAQMGGLLMALRTRGETVDEYAAAASVMRAKCHKVRAPHGAIDIVGTGGDGKGTLNISTATAFVVAGAGVPVAKHGNRNLSSKSGAADALTEMGLNVMIGPEQVEACLLEAGIGFMMAPMHHPAMRHVGPVRAELGTRTIFNILGPLTNPAGVKRQLTGAFSPDLIRPMAEVLSALGSEKAWLVHGGDGTDELAISAASKVAALEGGQIREFELHPEEAGLPVHPFEEIVGGTPAENAQAFHALLDGAPGAYRDAVLLNAAAALVVADRAADLREGVEIATDSILSGAAKAKVALLARLTNAA.

5-phospho-alpha-D-ribose 1-diphosphate contacts are provided by residues Gly-81, 84-85 (GD), Thr-89, 91-94 (NIST), 109-117 (KHGNRNLSS), and Ala-121. Gly-81 contributes to the anthranilate binding site. Ser-93 is a binding site for Mg(2+). Asn-112 contributes to the anthranilate binding site. Residue Arg-167 participates in anthranilate binding. 2 residues coordinate Mg(2+): Asp-226 and Glu-227.

Belongs to the anthranilate phosphoribosyltransferase family. In terms of assembly, homodimer. Requires Mg(2+) as cofactor.

The catalysed reaction is N-(5-phospho-beta-D-ribosyl)anthranilate + diphosphate = 5-phospho-alpha-D-ribose 1-diphosphate + anthranilate. Its pathway is amino-acid biosynthesis; L-tryptophan biosynthesis; L-tryptophan from chorismate: step 2/5. Its function is as follows. Catalyzes the transfer of the phosphoribosyl group of 5-phosphorylribose-1-pyrophosphate (PRPP) to anthranilate to yield N-(5'-phosphoribosyl)-anthranilate (PRA). This is Anthranilate phosphoribosyltransferase from Cereibacter sphaeroides (strain KD131 / KCTC 12085) (Rhodobacter sphaeroides).